We begin with the raw amino-acid sequence, 96 residues long: Nucleoid-associated protein TC_0612 (96 aa).

It belongs to the YbaB/EbfC family. In terms of assembly, homodimer.

The protein localises to the cytoplasm. It localises to the nucleoid. Functionally, binds to DNA and alters its conformation. May be involved in regulation of gene expression, nucleoid organization and DNA protection. The protein is Nucleoid-associated protein TC_0612 of Chlamydia muridarum (strain MoPn / Nigg).